The chain runs to 122 residues: Large ribosomal subunit protein uL14c (122 aa).

The protein belongs to the universal ribosomal protein uL14 family. Part of the 50S ribosomal subunit.

It is found in the plastid. The protein resides in the chloroplast. Binds to 23S rRNA. This Phalaenopsis aphrodite subsp. formosana (Moth orchid) protein is Large ribosomal subunit protein uL14c.